We begin with the raw amino-acid sequence, 239 residues long: Probable transcriptional regulatory protein Bcer98_0465 (239 aa).

Belongs to the TACO1 family. YeeN subfamily.

The protein resides in the cytoplasm. In Bacillus cytotoxicus (strain DSM 22905 / CIP 110041 / 391-98 / NVH 391-98), this protein is Probable transcriptional regulatory protein Bcer98_0465.